A 675-amino-acid polypeptide reads, in one-letter code: Methionine--tRNA ligase (675 aa).

The short motif at 15–25 (PYANGSIHLGH) is the 'HIGH' region element. Zn(2+) is bound by residues cysteine 146, cysteine 149, cysteine 159, and cysteine 162. The short motif at 332–336 (KMSKS) is the 'KMSKS' region element. Lysine 335 is a binding site for ATP. The region spanning 573–675 (DFAKIDMRIA…SGAKPGHQVK (103 aa)) is the tRNA-binding domain.

It belongs to the class-I aminoacyl-tRNA synthetase family. MetG type 1 subfamily. As to quaternary structure, homodimer. Requires Zn(2+) as cofactor.

It is found in the cytoplasm. It catalyses the reaction tRNA(Met) + L-methionine + ATP = L-methionyl-tRNA(Met) + AMP + diphosphate. In terms of biological role, is required not only for elongation of protein synthesis but also for the initiation of all mRNA translation through initiator tRNA(fMet) aminoacylation. The chain is Methionine--tRNA ligase from Proteus mirabilis (strain HI4320).